The chain runs to 235 residues: Orotidine 5'-phosphate decarboxylase (235 aa).

Residues Asp17, Lys39, 66 to 75 (DLKLHDIGNT), Thr121, Arg182, Gln191, Gly211, and Arg212 contribute to the substrate site. The active-site Proton donor is the Lys68.

Belongs to the OMP decarboxylase family. Type 1 subfamily. Homodimer.

It catalyses the reaction orotidine 5'-phosphate + H(+) = UMP + CO2. Its pathway is pyrimidine metabolism; UMP biosynthesis via de novo pathway; UMP from orotate: step 2/2. Its function is as follows. Catalyzes the decarboxylation of orotidine 5'-monophosphate (OMP) to uridine 5'-monophosphate (UMP). In Rhodopseudomonas palustris (strain BisB5), this protein is Orotidine 5'-phosphate decarboxylase.